The sequence spans 771 residues: Chaperone protein dnaK3 (771 aa).

Thr-198 is modified (phosphothreonine; by autocatalysis). Residues Phe-624–Phe-771 form a disordered region. Composition is skewed to basic and acidic residues over residues Tyr-630 to Asp-652 and Tyr-708 to Ala-734.

It belongs to the heat shock protein 70 family.

In terms of biological role, acts as a chaperone. This chain is Chaperone protein dnaK3 (dnaK3), found in Synechocystis sp. (strain ATCC 27184 / PCC 6803 / Kazusa).